The chain runs to 176 residues: Probable fimbrial subunit LpfE (176 aa).

The signal sequence occupies residues 1–23 (MKFKRLLHSGIASLSLVACGVNA).

The protein belongs to the fimbrial protein family.

The protein localises to the fimbrium. In terms of biological role, part of the lpfABCC'DE fimbrial operon. LP fimbriae may participate in the interaction with eukaryotic cells by assisting in microcolony formation. This is Probable fimbrial subunit LpfE (lpfE) from Escherichia coli O157:H7.